We begin with the raw amino-acid sequence, 547 residues long: Solute carrier family 22 member 25 (547 aa).

At 1-9 (MAFQDLLDQ) the chain is on the cytoplasmic side. The chain crosses the membrane as a helical span at residues 10-30 (VGGLGRFQILQMVFLIMFNVI). At 31-145 (VYHQTQLENF…DLVCESQPLN (115 aa)) the chain is on the extracellular side. N-linked (GlcNAc...) asparagine glycans are attached at residues N56 and N102. The helical transmembrane segment at 146-166 (SVAKFLFMAGMMVGGNLYGHL) threads the bilayer. Over 167 to 177 (SDRFGRKFVLR) the chain is Cytoplasmic. Residues 178–198 (WSYLQLAIVGTCAAFAPTILV) form a helical membrane-spanning segment. Over 199–204 (YCSLRF) the chain is Extracellular. Residues 205-225 (LAGAATFSIIVNTVLLIVEWI) traverse the membrane as a helical segment. The Cytoplasmic segment spans residues 226 to 234 (THQFCAMAL). A helical membrane pass occupies residues 235 to 255 (TLTLCAASIGHITLGSLAFVI). The Extracellular segment spans residues 256–259 (RDQC). Residues 260 to 280 (ILQLVMSAPCFVFFLFSRWLA) traverse the membrane as a helical segment. The Cytoplasmic portion of the chain corresponds to 281–349 (ESARWLIINN…LLRIPNICKR (69 aa)). Residues 350 to 370 (ICFLSFVRFASTIPFWGLTLH) traverse the membrane as a helical segment. The Extracellular segment spans residues 371 to 377 (LQHLGNN). The chain crosses the membrane as a helical span at residues 378 to 398 (VFLLQTLFGAVTLLANCVAPW). Residues 399–406 (ALNHMSRR) lie on the Cytoplasmic side of the membrane. The chain crosses the membrane as a helical span at residues 407 to 427 (LSQMLLMFLLATCLLAIIFVP). Over 428 to 434 (QEMQTLR) the chain is Extracellular. The helical transmembrane segment at 435-455 (VVLATLGVGAASLGITCSTAQ) threads the bilayer. The Cytoplasmic portion of the chain corresponds to 456-470 (ENELIPSIIRGRATG). Residues 471-491 (ITGNFANIGGALASLMMILSI) traverse the membrane as a helical segment. The Extracellular segment spans residues 492 to 494 (YSR). The chain crosses the membrane as a helical span at residues 495–515 (PLPWIIYGVFAILSGLVVLLL). The Cytoplasmic segment spans residues 516 to 547 (PETRNQPLLDSIQDVENEGVNSLAAPQRSSVL).

Belongs to the major facilitator (TC 2.A.1) superfamily. Organic cation transporter (TC 2.A.1.19) family. In terms of tissue distribution, expressed exclusively in liver in both embryo and adult.

The protein localises to the membrane. This is Solute carrier family 22 member 25 from Homo sapiens (Human).